The primary structure comprises 384 residues: F-box protein At2g07140 (384 aa).

One can recognise an F-box domain in the interval 1-46 (MTLPELPKDLVEEILSFVPATSLKRLRSTCKGWNRLFKDDKRFTRI).

The protein is F-box protein At2g07140 of Arabidopsis thaliana (Mouse-ear cress).